Consider the following 158-residue polypeptide: Small ribosomal subunit protein uS7c (158 aa).

The protein belongs to the universal ribosomal protein uS7 family. As to quaternary structure, part of the 30S ribosomal subunit.

It is found in the plastid. It localises to the chloroplast. Its function is as follows. One of the primary rRNA binding proteins, it binds directly to 16S rRNA where it nucleates assembly of the head domain of the 30S subunit. The polypeptide is Small ribosomal subunit protein uS7c (rps7) (Trieres chinensis (Marine centric diatom)).